The sequence spans 492 residues: Nuclear autoantigenic sperm protein homolog (492 aa).

The span at 1–14 (MSAEAEAIVTTATA) shows a compositional bias: low complexity. Disordered regions lie at residues 1 to 52 (MSAE…EQER) and 123 to 254 (DVPD…EEGV). Phosphothreonine is present on residues Thr-32 and Thr-33. Over residues 124–145 (VPDEAADDDDEDVDDDEEESAE) the composition is skewed to acidic residues. 2 stretches are compositionally biased toward basic and acidic residues: residues 147–159 (GAAK…DTKE) and 170–179 (KELDTIKEGS). A phosphoserine mark is found at Ser-179 and Ser-184. Thr-185 carries the post-translational modification Phosphothreonine. Ser-193 carries the post-translational modification Phosphoserine. The span at 226–238 (STSNGEVTASCSN) shows a compositional bias: polar residues. The span at 244 to 253 (VEEEPEEEEG) shows a compositional bias: acidic residues. TPR repeat units follow at residues 284 to 317 (AEVQ…HGEL) and 326 to 359 (AELH…IEEE). Residues 377-400 (MLDLEETKQEILAKIQEIEEMQAQ) adopt a coiled-coil conformation. A compositionally biased stretch (low complexity) spans 418–459 (SGDAAAASSSSSSSANGAASSSSSSSKGAAAASSSTISSSSA). Positions 418–492 (SGDAAAASSS…LCSPAKRAAV (75 aa)) are disordered. Residues Ser-478 and Ser-485 each carry the phosphoserine modification.

The protein belongs to the NASP family. Interacts with the histone H3-H4 heterodimer; the interaction with H4 is probably indirect and mediated by H3 (His3, His3.3A and His3.3B). Interacts with His2Av; this interaction directly or indirectly destabilizes His2Av.

Its subcellular location is the cytoplasm. The protein localises to the nucleus. The protein resides in the perinuclear region. Component of the histone chaperone network. Binds and stabilizes histone H3-H4 not bound to chromatin to maintain a soluble reservoir and modulate degradation by chaperone-mediated autophagy. May also bind and stabilize monomeric H3. Maternal effect gene essential for early embryogenesis. The protein is Nuclear autoantigenic sperm protein homolog of Drosophila melanogaster (Fruit fly).